A 1059-amino-acid polypeptide reads, in one-letter code: Probable sucrose-phosphate synthase (1059 aa).

Disordered stretches follow at residues 95–145 (AVQR…VKSR), 671–695 (RHPQWQRSEDGGESSESEESPGDSL), 710–731 (DGERSGDSGNDNSLDPDGNATD), and 748–769 (SKDTRRGGATEKSGQNSNASKF). Over residues 102–114 (RRLERERGRREAT) the composition is skewed to basic and acidic residues. The span at 681 to 691 (GGESSESEESP) shows a compositional bias: acidic residues.

It belongs to the glycosyltransferase 1 family. As to quaternary structure, homodimer or homotetramer.

It carries out the reaction beta-D-fructose 6-phosphate + UDP-alpha-D-glucose = sucrose 6(F)-phosphate + UDP + H(+). It functions in the pathway glycan biosynthesis; sucrose biosynthesis; sucrose from D-fructose 6-phosphate and UDP-alpha-D-glucose: step 1/2. Activity is regulated by phosphorylation and moderated by concentration of metabolites and light. In terms of biological role, plays a role in photosynthetic sucrose synthesis by catalyzing the rate-limiting step of sucrose biosynthesis from UDP-glucose and fructose- 6-phosphate. Involved in the regulation of carbon partitioning in the leaves of plants. May regulate the synthesis of sucrose and therefore play a major role as a limiting factor in the export of photoassimilates out of the leaf. Plays a role for sucrose availability that is essential for plant growth and fiber elongation. The polypeptide is Probable sucrose-phosphate synthase (SPS) (Vicia faba (Broad bean)).